Consider the following 75-residue polypeptide: Phi-liotoxin-Lw1a (75 aa).

The N-terminal stretch at 1–25 (MNFATKVSLLLLAIAVIVIVEGGEG) is a signal peptide. Positions 26 to 39 (DSWFEEHEESDTER) are excised as a propeptide. 2 disulfides stabilise this stretch: cysteine 50-cysteine 62 and cysteine 56-cysteine 68.

Expressed by the venom gland.

It localises to the secreted. Affects the activity of both ryanodine-sensitive calcium-release channels RyR1 and RyR2 with high potency. At lower concentrations the toxin increases full openings of the RyRs, and at higher concentrations it inhibits full openings and induce openings to subconductance levels and reduces the number of full conductance openings. The different actions may be attributed to the toxins binding at different sites on the RyRs, with binding at a high-affinity site mediating the increase in full openings and the induction of subconductance states evoked upon binding to a lower-affinity site. Insect-selective toxin that provokes a dose-dependent contractile paralysis in crickets and blowfly larvae, followed by death. This is Phi-liotoxin-Lw1a from Hormurus waigiensis (Australian rainforest scorpion).